A 61-amino-acid chain; its full sequence is Metallothionein-1H (61 aa).

Met-1 is subject to N-acetylmethionine. The interval 1–29 is beta; that stretch reads MDPNCSCEAGGSCACAGSCKCKKCKCTSC. Positions 5, 7, 13, 15, 19, 21, 24, 26, 29, 33, 34, 36, 37, 41, 44, 48, 50, and 57 each coordinate a divalent metal cation. The interval 30–61 is alpha; the sequence is KKSCCSCCPLGCAKCAQGCICKGASEKCSCCA. The residue at position 58 (Ser-58) is a Phosphoserine. Cys-59 and Cys-60 together coordinate a divalent metal cation.

The protein belongs to the metallothionein superfamily. Type 1 family. Monomer.

In terms of biological role, metallothioneins have a high content of cysteine residues that bind various heavy metals; these proteins are transcriptionally regulated by both heavy metals and glucocorticoids. In Homo sapiens (Human), this protein is Metallothionein-1H (MT1H).